Here is a 514-residue protein sequence, read N- to C-terminus: HTH-type transcriptional regulatory protein TyrR (514 aa).

The region spanning Arg2 to Trp72 is the ACT domain. Residues Glu78–Met120 form the PAS domain. The Sigma-54 factor interaction domain maps to Ile206–Thr428. Residues Gly234 to Asp241 and Ala290 to Glu299 each bind ATP. A DNA-binding region (H-T-H motif) is located at residues Ser482–Arg502.

In terms of assembly, homodimer. In presence of tyrosine (or high concentrations of phenylalanine or tryptophan) and ATP, it self-associates to form an hexamer.

It localises to the cytoplasm. Functionally, dual transcriptional regulator of the TyrR regulon, which includes a number of genes coding for proteins involved in the biosynthesis or transport of the three aromatic amino acids, phenylalanine, tyrosine and tryptophan. These three aromatic amino acids act as effectors which bind to the TyrR protein to form an active regulatory protein. Acts by binding specifically to TyrR boxes in the promoter region of the target genes. This Citrobacter braakii protein is HTH-type transcriptional regulatory protein TyrR.